Reading from the N-terminus, the 126-residue chain is uncharacterized protein (126 aa).

This is an uncharacterized protein from Rickettsia prowazekii (strain Madrid E).